The chain runs to 513 residues: Light-independent protochlorophyllide reductase subunit B (513 aa).

Residue Asp-36 participates in [4Fe-4S] cluster binding. Asp-299 acts as the Proton donor in catalysis. A substrate-binding site is contributed by 434-435 (GM).

The protein belongs to the ChlB/BchB/BchZ family. Protochlorophyllide reductase is composed of three subunits; ChlL, ChlN and ChlB. Forms a heterotetramer of two ChlB and two ChlN subunits. It depends on [4Fe-4S] cluster as a cofactor.

It localises to the plastid. It is found in the chloroplast. It carries out the reaction chlorophyllide a + oxidized 2[4Fe-4S]-[ferredoxin] + 2 ADP + 2 phosphate = protochlorophyllide a + reduced 2[4Fe-4S]-[ferredoxin] + 2 ATP + 2 H2O. The protein operates within porphyrin-containing compound metabolism; chlorophyll biosynthesis (light-independent). Component of the dark-operative protochlorophyllide reductase (DPOR) that uses Mg-ATP and reduced ferredoxin to reduce ring D of protochlorophyllide (Pchlide) to form chlorophyllide a (Chlide). This reaction is light-independent. The NB-protein (ChlN-ChlB) is the catalytic component of the complex. This Anthoceros angustus (Hornwort) protein is Light-independent protochlorophyllide reductase subunit B.